Consider the following 142-residue polypeptide: Peptide methionine sulfoxide reductase MsrB (142 aa).

The 124-residue stretch at 2 to 125 (IKKNKEELND…NSAAIQFIPY (124 aa)) folds into the MsrB domain. Catalysis depends on Cys114, which acts as the Nucleophile.

Belongs to the MsrB Met sulfoxide reductase family.

It catalyses the reaction L-methionyl-[protein] + [thioredoxin]-disulfide + H2O = L-methionyl-(R)-S-oxide-[protein] + [thioredoxin]-dithiol. The sequence is that of Peptide methionine sulfoxide reductase MsrB from Staphylococcus epidermidis (strain ATCC 35984 / DSM 28319 / BCRC 17069 / CCUG 31568 / BM 3577 / RP62A).